The chain runs to 534 residues: Serine protease vicPa (534 aa).

The first 17 residues, 1-17 (MLCYLLIHILCLQAVLG), serve as a signal peptide directing secretion. Asn65 and Asn126 each carry an N-linked (GlcNAc...) asparagine glycan. Ser174 acts as the Charge relay system in catalysis. N-linked (GlcNAc...) asparagine glycans are attached at residues Asn297, Asn416, and Asn436. The active-site Charge relay system is the Asp450.

This sequence belongs to the peptidase S28 family.

It participates in mycotoxin biosynthesis. Serine protease, part of the gene cluster that mediates the biosynthesis of the secondary metabolite victorin, the molecular basis for Victoria blight of oats. Within the pathway, vicPa and vicPb are probably involved in the processing of the vicA1 and vicA2 precursors. The pathway starts with the processing of the precursor vicA1 by several endopeptidases including kexin proteases as well as the cluster-specific S28 family peptidases vicPa and vicPb to produce 7 identical copies of the hexapeptide Gly-Leu-Lys-Leu-Ala-Phe. After being excised from the precursor peptide, the core peptides are cyclized and modified post-translationally by enzymes encoded within the gene cluster. The ustYa family oxidase vicYb is required for the formation of the macrocycle in victorin and the copper amine oxidases (CAOs) vicK1 and vicK2 are responsible for converting victorin to the active form by oxidizing the N-terminal glycyl residue in the peptides to glyoxylate. Relaxed substrate specificity of enzymes in the victorin biosynthetic pathway results in a metabolic grid that produces a set of analogs including victorinines B, C, E or HV-toxin M. The sequence is that of Serine protease vicPa from Bipolaris victoriae (strain FI3) (Victoria blight of oats agent).